We begin with the raw amino-acid sequence, 584 residues long: Pescadillo homolog (584 aa).

Residues 1–54 form a required for 28S ribosomal RNA processing region; that stretch reads MGGLEKKKYERGSATNYITRNKARKKLQLSLPDFRRLCILKGIYPHEPKHKKKV. Residues 1-257 are sufficient for nucleolar localization; that stretch reads MGGLEKKKYE…PKLEGQAQAE (257 aa). Lys-98 carries the N6-acetyllysine modification. The interval 312–414 is sufficient for interaction with MAP1B; sequence RKKELEAQEK…LLLPVAEYFP (103 aa). Residues 321-414 enclose the BRCT domain; that stretch reads KHKKLFEGLK…LLLPVAEYFP (94 aa). A disordered region spans residues 449–510; the sequence is DPGHLEEEEE…EEKKPQVMAG (62 aa). Residues 454–489 show a composition bias toward acidic residues; it reads EEEEEEDEDDDNEGDVAAENEEEDVEVESEEEEEEE. Residues 496–505 are compositionally biased toward basic and acidic residues; that stretch reads EQHRLEEKKP. A Glycyl lysine isopeptide (Lys-Gly) (interchain with G-Cter in SUMO1); alternate cross-link involves residue Lys-513. Lys-513 participates in a covalent cross-link: Glycyl lysine isopeptide (Lys-Gly) (interchain with G-Cter in SUMO2); alternate. The tract at residues 535 to 584 is required for 28S ribosomal RNA processing; that stretch reads MMKKREKYLYQKIMFGKRRKIREANKLAEKRKAHDDAVRSEKKAKRTRPV. The segment covering 560–575 has biased composition (basic and acidic residues); sequence KLAEKRKAHDDAVRSE. The disordered stretch occupies residues 560 to 584; the sequence is KLAEKRKAHDDAVRSEKKAKRTRPV.

This sequence belongs to the pescadillo family. In terms of assembly, component of the PeBoW complex, composed of BOP1, PES1 and WDR12. The complex is held together by BOP1, which interacts with PES1 via its N-terminal domain and with WDR12 via a high-affinity interaction between the seven-bladed beta-propeller domains of the 2 proteins. The PeBoW complex associates with the 66S pre-ribosome. The PeBoW complex also associates with DDX27, PES1 interacts directly with DDX27. Interacts with IRS1 and UBTF. May interact with MAP1B. In terms of processing, sumoylated. As to expression, ubiquitous. Highest levels appear to be found in tissues that contain a population of proliferating cells, such as ovary and testis. Also appears to be highly expressed in kidney and liver. In the brain expression is restricted to neural progenitor cells and postmitotic neurons. Highly expressed in malignant astrocytes.

It localises to the nucleus. It is found in the nucleolus. Its subcellular location is the nucleoplasm. The protein resides in the chromosome. Functionally, component of the PeBoW complex, which is required for maturation of 28S and 5.8S ribosomal RNAs and formation of the 60S ribosome. This Mus musculus (Mouse) protein is Pescadillo homolog (Pes1).